A 736-amino-acid polypeptide reads, in one-letter code: MNHSPQSARPVSIMRRFLDSEAAGGITLMAAAALALIVANSPFAQTYFDALHLYIGPLSLAHWINDALMAIFFLLVGLEIKREMLDGQLASWPNRMLPGIAAAGGVILPAIIFAVLNHDNPAKLRGWAVPSATDIAFALGVLSLLGSRAPSSLKVFLATLAILDDLAAVVIIAIFYTAEISMPYLGAAFITAAVLFVMNRMDVVKLLPYLISAVILWFFVFNSGVHATVAGVVAALMIPLKPAPGRPDDMTSPLHKLEHALAKPVAFIVVPIFGFANAGISFKGLEASVLGDTLTLGILLGLFLGKQFGVFGAAWLAIKTGLAEKPMGASWVQLYGVAILCGIGFTMSIFIGLLSFPSDLMQTETKIGVLSGSALSAICGYLLLRAARPDQSAANPLWKADESPEAKNFGRFLCVFHFASYIASTYCTERLQAASSLLRRSSLEFALPGLLKRLIPRRFRAVETEIPVVRLHGAIMTGGTSLRPTLSLASTAGILEKAFADKHAPAVAISINSPGGAPVQSRLIYRRIRDLAAEHQKKVFVFVEDVAASGGYMIALAGDEIIADPSSIVGSIGVVSASFGFPELLKKIGVERRVYTAGSNKVTLDPFQPEKAEDIERLKALQLEIHATFIDMVKERRAGKLGDNPDLFSGLFWTGTTAASLGLIDGLGDMLSFLRKTYGDKVKLKLIQPQRGLLGRKLPGIGMDSGSVEPAQIAAHLGDGLLCVAEEKAIWARYGL.

Positions 1 to 387 are na(+)/H(+) antiporter NhaA; the sequence is MNHSPQSARP…ICGYLLLRAA (387 aa). Transmembrane regions (helical) follow at residues 23-43, 58-78, 96-116, 126-146, 155-175, 178-198, 201-221, 265-285, 298-318, 334-354, and 367-387; these read AGGI…NSPF, LSLA…LVGL, MLPG…FAVL, GWAV…SLLG, VFLA…IAIF, AEIS…LFVM, MDVV…FFVF, VAFI…FKGL, ILLG…WLAI, LYGV…IGLL, and IGVL…LRAA. The interval 388–736 is peptidase S49; that stretch reads RPDQSAANPL…EKAIWARYGL (349 aa).

The protein in the N-terminal section; belongs to the NhaA Na(+)/H(+) (TC 2.A.33) antiporter family. In the C-terminal section; belongs to the peptidase S49 family.

The protein localises to the cell inner membrane. It carries out the reaction Na(+)(in) + 2 H(+)(out) = Na(+)(out) + 2 H(+)(in). Its function is as follows. Na(+)/H(+) antiporter that extrudes sodium in exchange for external protons. The protein is Na(+)/H(+) antiporter NhaA of Brucella melitensis biotype 1 (strain ATCC 23456 / CCUG 17765 / NCTC 10094 / 16M).